A 512-amino-acid polypeptide reads, in one-letter code: 2,3-bisphosphoglycerate-independent phosphoglycerate mutase (512 aa).

Aspartate 12 and serine 62 together coordinate Mn(2+). Serine 62 functions as the Phosphoserine intermediate in the catalytic mechanism. Substrate-binding positions include histidine 123, 153–154 (RD), arginine 185, arginine 191, 260–263 (RPDR), and lysine 333. Residues aspartate 400, histidine 404, aspartate 441, histidine 442, and histidine 460 each contribute to the Mn(2+) site.

Belongs to the BPG-independent phosphoglycerate mutase family. As to quaternary structure, monomer. Mn(2+) is required as a cofactor.

It carries out the reaction (2R)-2-phosphoglycerate = (2R)-3-phosphoglycerate. It functions in the pathway carbohydrate degradation; glycolysis; pyruvate from D-glyceraldehyde 3-phosphate: step 3/5. Its function is as follows. Catalyzes the interconversion of 2-phosphoglycerate and 3-phosphoglycerate. This Clostridium beijerinckii (strain ATCC 51743 / NCIMB 8052) (Clostridium acetobutylicum) protein is 2,3-bisphosphoglycerate-independent phosphoglycerate mutase.